The primary structure comprises 276 residues: N-acetylmuramoyl-L-alanine amidase AmiD (276 aa).

The N-terminal stretch at 1–16 is a signal peptide; it reads MRRFFWLVAAALLLAG. The N-palmitoyl cysteine moiety is linked to residue Cys-17. Cys-17 carries the S-diacylglycerol cysteine lipid modification. The N-acetylmuramoyl-L-alanine amidase domain maps to 42–179; that stretch reads PRIKVLVIHY…APQRKDDPGP (138 aa). His-50 contributes to the Zn(2+) binding site. 51–52 lines the substrate pocket; that stretch reads YT. The active-site Proton acceptor is Glu-119. The Zn(2+) site is built by His-166 and Asp-176.

It belongs to the N-acetylmuramoyl-L-alanine amidase 2 family. Zn(2+) is required as a cofactor.

It localises to the cell outer membrane. It carries out the reaction Hydrolyzes the link between N-acetylmuramoyl residues and L-amino acid residues in certain cell-wall glycopeptides.. The polypeptide is N-acetylmuramoyl-L-alanine amidase AmiD (amiD) (Escherichia coli (strain K12)).